Reading from the N-terminus, the 288-residue chain is RELT-like protein 1 (288 aa).

Positions 1–23 are cleaved as a signal peptide; it reads MAPPAASGIPSIAPSLGPTAVWL. Residues 24–57 lie on the Extracellular side of the membrane; the sequence is GNRSDLGDVQALASRDLPTTTVTAGNNNKPEHLE. Asparagine 25 carries an N-linked (GlcNAc...) asparagine glycan. Residues 58–78 traverse the membrane as a helical segment; it reads YVAFVLVPVFFIMGLLGILIC. The Cytoplasmic segment spans residues 79–288; it reads HVLKKKGYRC…EGTQERRSSE (210 aa). 2 disordered regions span residues 145 to 172 and 237 to 288; these read FEPESPMSPNAPGSPTSPGSPLSPGAAS and HKSN…RSSE. A compositionally biased stretch (low complexity) spans 152–172; sequence SPNAPGSPTSPGSPLSPGAAS. A compositionally biased stretch (basic and acidic residues) spans 237–246; the sequence is HKSNSKERKS.

The protein belongs to the RELT family.

The protein localises to the cell membrane. The polypeptide is RELT-like protein 1 (RELL1) (Gallus gallus (Chicken)).